Here is a 148-residue protein sequence, read N- to C-terminus: Transcription antitermination protein NusB (148 aa).

This sequence belongs to the NusB family.

Functionally, involved in transcription antitermination. Required for transcription of ribosomal RNA (rRNA) genes. Binds specifically to the boxA antiterminator sequence of the ribosomal RNA (rrn) operons. This Nitrosococcus oceani (strain ATCC 19707 / BCRC 17464 / JCM 30415 / NCIMB 11848 / C-107) protein is Transcription antitermination protein NusB.